The sequence spans 172 residues: RNA pyrophosphohydrolase (172 aa).

In terms of domain architecture, Nudix hydrolase spans 6-149 (GYRLNVGIVI…KRDVYRRAMK (144 aa)). A Nudix box motif is present at residues 38 to 59 (GGIDDGESPEQAMFRELYEEVG).

This sequence belongs to the Nudix hydrolase family. RppH subfamily. The cofactor is a divalent metal cation.

Its function is as follows. Accelerates the degradation of transcripts by removing pyrophosphate from the 5'-end of triphosphorylated RNA, leading to a more labile monophosphorylated state that can stimulate subsequent ribonuclease cleavage. The sequence is that of RNA pyrophosphohydrolase from Vibrio cholerae serotype O1 (strain ATCC 39315 / El Tor Inaba N16961).